We begin with the raw amino-acid sequence, 369 residues long: S-adenosyl-L-methionine-dependent uroporphyrinogen III methyltransferase, chloroplastic (369 aa).

A chloroplast-targeting transit peptide spans 1 to 28 (MALVQRIPISSSSIRNWQQARTNLTPIC). S-adenosyl-L-homocysteine contacts are provided by residues P124, 200–202 (GGD), 230–231 (TA), M284, and T341.

This sequence belongs to the precorrin methyltransferase family. As to expression, mostly expressed in leaves, and, to a lower extent, in stems, flowers and siliques.

The protein resides in the plastid. Its subcellular location is the chloroplast. It carries out the reaction uroporphyrinogen III + 2 S-adenosyl-L-methionine = precorrin-2 + 2 S-adenosyl-L-homocysteine + H(+). It participates in porphyrin-containing compound metabolism; siroheme biosynthesis; precorrin-2 from uroporphyrinogen III: step 1/1. Its function is as follows. Essential protein required for siroheme biosynthesis. Catalyzes the two successive C-2 and C-7 methylation reactions involved in the conversion of uroporphyrinogen III to precorrin-2 via the intermediate formation of precorrin-1. It is a step in the biosynthesis of siroheme. Promotes nitrogen and sulfur assimilation as well as photosynthesis efficiency by triggering chlorophyll, nitrite reductase (NiR) and sulfite reductase (SiR) biosynthesis. The chain is S-adenosyl-L-methionine-dependent uroporphyrinogen III methyltransferase, chloroplastic from Arabidopsis thaliana (Mouse-ear cress).